The primary structure comprises 224 residues: uncharacterized protein (224 aa).

The Matrin-type zinc finger occupies 11–42; sequence YYCKYCQIFVKDTPFARRSHEQTYKHQDAIKK. Low complexity predominate over residues 67-80; that stretch reads ATATTASAVSSELA. Disordered stretches follow at residues 67-158 and 172-224; these read ATAT…RNRE and VKPK…YDQS. Basic residues predominate over residues 87-98; sequence KEHPKLRPSKKK. Low complexity predominate over residues 108–122; it reads TSSTETDTISTTHTS. The span at 175–199 shows a compositional bias: basic and acidic residues; that stretch reads KNLDKVPKLAENEGNKSLESKESNE. Positions 203–216 are enriched in basic residues; the sequence is VFKKKKSGKLRTKS.

It localises to the nucleus. The protein localises to the nucleolus. This is an uncharacterized protein from Schizosaccharomyces pombe (strain 972 / ATCC 24843) (Fission yeast).